We begin with the raw amino-acid sequence, 414 residues long: Serpin A3-6 (414 aa).

The N-terminal stretch at 1–25 (MRTERVSPLLALGILVAGLCSRVHC) is a signal peptide. Residues N103, N183, N233, N267, and N321 are each glycosylated (N-linked (GlcNAc...) asparagine).

The protein belongs to the serpin family. In terms of assembly, homodimer.

The protein localises to the cytoplasmic vesicle. Its subcellular location is the secretory vesicle. The protein resides in the chromaffin granule. It is found in the secreted. Serine protease inhibitor. In Bos taurus (Bovine), this protein is Serpin A3-6.